Reading from the N-terminus, the 159-residue chain is RNA pyrophosphohydrolase (159 aa).

The Nudix hydrolase domain maps to G6–K149. The Nudix box signature appears at G38–G59.

The protein belongs to the Nudix hydrolase family. RppH subfamily. The cofactor is a divalent metal cation.

Functionally, accelerates the degradation of transcripts by removing pyrophosphate from the 5'-end of triphosphorylated RNA, leading to a more labile monophosphorylated state that can stimulate subsequent ribonuclease cleavage. The protein is RNA pyrophosphohydrolase of Pseudomonas savastanoi pv. phaseolicola (strain 1448A / Race 6) (Pseudomonas syringae pv. phaseolicola (strain 1448A / Race 6)).